The following is a 343-amino-acid chain: Ribosomal RNA small subunit methyltransferase, chloroplastic (343 aa).

A chloroplast-targeting transit peptide spans 1–48; that stretch reads MMNAVITSATINCNSLSPSWTCGDNSPSKLLLGEISAALSRRRTVKVS. Residues His78, Met80, Gly105, Glu126, Asp151, and Asn183 each contribute to the S-adenosyl-L-methionine site.

It belongs to the class I-like SAM-binding methyltransferase superfamily. rRNA adenine N(6)-methyltransferase family.

The protein resides in the plastid. It localises to the chloroplast. Its function is as follows. Required for methylation of the 3' adenosines in the small subunit of plastid rRNA. Essential for chloroplast biogenesis at low temperatures. This chain is Ribosomal RNA small subunit methyltransferase, chloroplastic, found in Arabidopsis thaliana (Mouse-ear cress).